Reading from the N-terminus, the 275-residue chain is Dermonecrotic toxin SpaSicTox-betaIIA1 (275 aa).

Residue His-5 is part of the active site. The Mg(2+) site is built by Glu-25 and Asp-27. His-41 serves as the catalytic Nucleophile. Cystine bridges form between Cys-45/Cys-51 and Cys-47/Cys-190. Asp-85 is a binding site for Mg(2+).

It belongs to the arthropod phospholipase D family. Class II subfamily. The cofactor is Mg(2+). In terms of tissue distribution, expressed by the venom gland.

It localises to the secreted. The enzyme catalyses an N-(acyl)-sphingosylphosphocholine = an N-(acyl)-sphingosyl-1,3-cyclic phosphate + choline. The catalysed reaction is an N-(acyl)-sphingosylphosphoethanolamine = an N-(acyl)-sphingosyl-1,3-cyclic phosphate + ethanolamine. It carries out the reaction a 1-acyl-sn-glycero-3-phosphocholine = a 1-acyl-sn-glycero-2,3-cyclic phosphate + choline. It catalyses the reaction a 1-acyl-sn-glycero-3-phosphoethanolamine = a 1-acyl-sn-glycero-2,3-cyclic phosphate + ethanolamine. In terms of biological role, dermonecrotic toxins cleave the phosphodiester linkage between the phosphate and headgroup of certain phospholipids (sphingolipid and lysolipid substrates), forming an alcohol (often choline) and a cyclic phosphate. This toxin acts on sphingomyelin (SM). It may also act on ceramide phosphoethanolamine (CPE), lysophosphatidylcholine (LPC) and lysophosphatidylethanolamine (LPE), but not on lysophosphatidylserine (LPS), and lysophosphatidylglycerol (LPG). It acts by transphosphatidylation, releasing exclusively cyclic phosphate products as second products. Induces dermonecrosis, hemolysis, increased vascular permeability, edema, inflammatory response, and platelet aggregation. This chain is Dermonecrotic toxin SpaSicTox-betaIIA1, found in Sicarius patagonicus (Six-eyed sand spider).